A 432-amino-acid polypeptide reads, in one-letter code: Homogentisate 1,2-dioxygenase (432 aa).

The Proton acceptor role is filled by H286. Positions 329 and 335 each coordinate Fe cation. The homogentisate site is built by Y344 and H365. H365 is a Fe cation binding site.

This sequence belongs to the homogentisate dioxygenase family. As to quaternary structure, hexamer; dimer of trimers. Fe cation serves as cofactor.

It carries out the reaction homogentisate + O2 = 4-maleylacetoacetate + H(+). The protein operates within amino-acid degradation; L-phenylalanine degradation; acetoacetate and fumarate from L-phenylalanine: step 4/6. Involved in the catabolism of homogentisate (2,5-dihydroxyphenylacetate or 2,5-OH-PhAc), a central intermediate in the degradation of phenylalanine and tyrosine. Catalyzes the oxidative ring cleavage of the aromatic ring of homogentisate to yield maleylacetoacetate. This is Homogentisate 1,2-dioxygenase from Bordetella bronchiseptica (strain ATCC BAA-588 / NCTC 13252 / RB50) (Alcaligenes bronchisepticus).